Consider the following 232-residue polypeptide: MKKAVVVFSGGQDSTTCLVQALKEFDEVHAITFDYGQRHKLEIEVAQKIAKDLGVKAHKVMDVGLLNELAISSLTRDDIPVSHELQENGLPNSFVPGRNILFLTLAGIYAYQIGADTVITGVCETDFSGYPDCRDDFVKSMNTALVKGMDRALTIKTPLMWLNKAETWALADQYNALQLVRENTLTCYNGIIGDGCGDCPSCDLRKAGLDEYLNNKDAVMKSLVQKQESEGL.

8–18 is a binding site for ATP; the sequence is FSGGQDSTTCL. Zn(2+) contacts are provided by Cys-187, Cys-196, Cys-199, and Cys-202.

This sequence belongs to the QueC family. Requires Zn(2+) as cofactor.

It catalyses the reaction 7-carboxy-7-deazaguanine + NH4(+) + ATP = 7-cyano-7-deazaguanine + ADP + phosphate + H2O + H(+). It participates in purine metabolism; 7-cyano-7-deazaguanine biosynthesis. Catalyzes the ATP-dependent conversion of 7-carboxy-7-deazaguanine (CDG) to 7-cyano-7-deazaguanine (preQ(0)). The chain is 7-cyano-7-deazaguanine synthase from Vibrio parahaemolyticus serotype O3:K6 (strain RIMD 2210633).